Consider the following 603-residue polypeptide: Membrane protein insertase YidC (603 aa).

The helical transmembrane segment at 7–27 (FFITIALSVLILAVWQYFYVL) threads the bilayer. Over residues 38–51 (RVEQQRVEEQKKAA) the composition is skewed to basic and acidic residues. A disordered region spans residues 38 to 76 (RVEQQRVEEQKKAAEAANPGAGTPAPAPGTIPNAPGGDT). Low complexity predominate over residues 52 to 74 (EAANPGAGTPAPAPGTIPNAPGG). A run of 5 helical transmembrane segments spans residues 352-372 (FDLL…FWLI), 378-398 (FLGN…ALFF), 452-472 (WPVA…YITI), 497-517 (LFGL…WPLI), and 540-560 (IFTW…AGLV).

The protein belongs to the OXA1/ALB3/YidC family. Type 1 subfamily. As to quaternary structure, interacts with the Sec translocase complex via SecD. Specifically interacts with transmembrane segments of nascent integral membrane proteins during membrane integration.

Its subcellular location is the cell inner membrane. Required for the insertion and/or proper folding and/or complex formation of integral membrane proteins into the membrane. Involved in integration of membrane proteins that insert both dependently and independently of the Sec translocase complex, as well as at least some lipoproteins. Aids folding of multispanning membrane proteins. This is Membrane protein insertase YidC from Mesorhizobium japonicum (strain LMG 29417 / CECT 9101 / MAFF 303099) (Mesorhizobium loti (strain MAFF 303099)).